Here is a 309-residue protein sequence, read N- to C-terminus: D-alanine--D-alanine ligase (309 aa).

The 200-residue stretch at 106–305 folds into the ATP-grasp domain; it reads KMLWKAFGLP…FEQLVVKILE (200 aa). Residue 136 to 191 participates in ATP binding; the sequence is VEKLGLPVMVKPSLEGSSVGLTKVKRVEDLKSAVDFALKYDDTVLIEEWLSGAEFT. Asp259, Glu272, and Asn274 together coordinate Mg(2+).

Belongs to the D-alanine--D-alanine ligase family. Mg(2+) is required as a cofactor. Mn(2+) serves as cofactor.

It is found in the cytoplasm. It catalyses the reaction 2 D-alanine + ATP = D-alanyl-D-alanine + ADP + phosphate + H(+). It functions in the pathway cell wall biogenesis; peptidoglycan biosynthesis. Its function is as follows. Cell wall formation. This Pasteurella multocida (strain Pm70) protein is D-alanine--D-alanine ligase.